A 349-amino-acid polypeptide reads, in one-letter code: ATP phosphoribosyltransferase regulatory subunit (349 aa).

The disordered stretch occupies residues 325–349; that stretch reads ANGRGRGVRPRRASARGGRAGTRPR. The segment covering 339-349 has biased composition (low complexity); it reads ARGGRAGTRPR.

Belongs to the class-II aminoacyl-tRNA synthetase family. HisZ subfamily. In terms of assembly, heteromultimer composed of HisG and HisZ subunits.

It localises to the cytoplasm. It participates in amino-acid biosynthesis; L-histidine biosynthesis; L-histidine from 5-phospho-alpha-D-ribose 1-diphosphate: step 1/9. In terms of biological role, required for the first step of histidine biosynthesis. May allow the feedback regulation of ATP phosphoribosyltransferase activity by histidine. The protein is ATP phosphoribosyltransferase regulatory subunit of Anaeromyxobacter dehalogenans (strain 2CP-C).